The sequence spans 38 residues: Glucagon-like peptide (38 aa).

Belongs to the glucagon family.

It localises to the secreted. The protein is Glucagon-like peptide of Hydrolagus colliei (Spotted ratfish).